We begin with the raw amino-acid sequence, 1544 residues long: Rho guanine nucleotide exchange factor 12 (1544 aa).

Residues 1-62 (MSGTQSTITD…KTKSSSEESR (62 aa)) form a disordered region. At serine 2 the chain carries N-acetylserine. A compositionally biased stretch (basic and acidic residues) spans 28–45 (SPTDKKQKVERIASHDFD). Serine 41 is modified (phosphoserine). Residues 72 to 151 (CVIIQKDDNG…LTVQGRPPGS (80 aa)) form the PDZ domain. The stretch at 194 to 262 (MGEENNVVHN…LSKATGSAQD (69 aa)) forms a coiled coil. A disordered region spans residues 247–346 (PQLQEQLSKA…SLVGSPSTRI (100 aa)). Composition is skewed to polar residues over residues 249–260 (LQEQLSKATGSA) and 293–309 (DCSS…NADS). At serine 309 the chain carries Phosphoserine. A compositionally biased stretch (basic and acidic residues) spans 313–329 (GPKERIYLEENPEKSET). Residues 330 to 344 (IQDTDTQSLVGSPST) show a composition bias toward polar residues. Phosphoserine is present on serine 341. The 192-residue stretch at 367 to 558 (GQCSCFQSIE…LMYMKHLGVK (192 aa)) folds into the RGSL domain. A disordered region spans residues 570–706 (GRIGFLPKIK…GDTLDGTPRT (137 aa)). Residues 582 to 592 (MKKDKEGEEKG) are compositionally biased toward basic and acidic residues. Residues 631–640 (STPSSVSPEP) are compositionally biased toward polar residues. Serine 637 carries the phosphoserine modification. Residues 663–676 (ANSMSSVASGASFS) show a composition bias toward low complexity. Residue threonine 736 is modified to Phosphothreonine. Residues 787–977 (KRQEVINELF…RQILNYVNQA (191 aa)) enclose the DH domain. The PH domain maps to 1019-1132 (KMIHEGPLVW…WQDLICRMAA (114 aa)). The segment covering 1138–1149 (STKPIPLPQSTP) has biased composition (polar residues). The interval 1138 to 1179 (STKPIPLPQSTPGEGDNDEEDPSKLKEEQHGISVTGLQSPDR) is disordered. Residues serine 1288, serine 1327, serine 1377, serine 1457, and serine 1541 each carry the phosphoserine modification.

Interacts with GNA12 and GNA13, probably through the RGS-like domain. Interacts with RHOA, PLXNB1 and PLXNB2. Interacts through its PDZ domain with IGF1R beta subunit. Interacts with GCSAM. Found in a complex with ARHGEF11 and ARHGEF12; binding to ARHGEF11 and ARHGEF12 enhances CDC42 GEF activity of PLEKHG4B, and PLEKHG4B, in turn, inhibits ARHGEF11- and ARHGEF12-mediated RHOA activation. As to expression, ubiquitously expressed. Isoform 2 is found in jejunum and testis.

The protein resides in the cytoplasm. It is found in the membrane. Its function is as follows. May play a role in the regulation of RhoA GTPase by guanine nucleotide-binding alpha-12 (GNA12) and alpha-13 (GNA13). Acts as guanine nucleotide exchange factor (GEF) for RhoA GTPase and may act as GTPase-activating protein (GAP) for GNA12 and GNA13. The chain is Rho guanine nucleotide exchange factor 12 (ARHGEF12) from Homo sapiens (Human).